Consider the following 474-residue polypeptide: Iroquois-class homeodomain protein IRX-2 (474 aa).

Positions 115-177 (DPAYRKNATR…NARRRLKKEN (63 aa)) form a DNA-binding region, homeobox; TALE-type. Disordered regions lie at residues 177 to 220 (NKMT…EDEG), 262 to 373 (EDLE…PGGS), and 420 to 461 (PGET…DTSE). A Phosphoserine modification is found at S187. Residues 196 to 210 (DASRSKEESSDKAQD) are compositionally biased toward basic and acidic residues. The segment covering 262-275 (EDLEDEEDEEDECE) has biased composition (acidic residues). Low complexity-rich tracts occupy residues 293-305 (EAPLLSPAPEAAP) and 358-373 (PAAAAPASTGAPPGGS).

Belongs to the TALE/IRO homeobox family. Expressed in specific and overlapping patterns with Irx1 and Irx3 in the developing and adult metanephric kidney. In the adult metanephros, renal expression is found in the loop of Henle in the S3 proximal tubule segment and in the thick ascending limb (TAL) of the distal tubule.

The protein localises to the nucleus. This Mus musculus (Mouse) protein is Iroquois-class homeodomain protein IRX-2 (Irx2).